The sequence spans 1185 residues: Liprin-alpha-4 (1185 aa).

Coiled coils occupy residues 24–123 and 165–499; these read ANFE…CLVS and DEKV…GRGG. Disordered stretches follow at residues 638–709 and 721–757; these read SASP…RTLR and EEGKSALEDQGSNPSSSNSSQDSLHKGAKRKGIKSSI. Serine 640 is modified (phosphoserine). Residues 645 to 656 show a composition bias toward polar residues; sequence GRSTPKLTSRSA. Serine 681 carries the post-translational modification Phosphoserine. Over residues 684-695 the composition is skewed to basic and acidic residues; it reads SREENREDKATI. Residues 729 to 742 show a composition bias toward low complexity; the sequence is DQGSNPSSSNSSQD. 3 consecutive SAM domains span residues 829 to 895, 944 to 1008, and 1032 to 1101; these read WDGP…MVSL, NHEW…LKRL, and WTND…LLAL.

The protein belongs to the liprin family. Liprin-alpha subfamily. Forms homodimers and heterodimers with liprins-alpha and liprins-beta. Interacts with the second PTPase domain of PTPRD, PTPRF and PTPRS. Interacts with RIMS1 and RIMS2. Interacts with GIT1 and GIT2. Interacts with GRIP1. Interacts with KIF1A. Expressed only in the heart, brain, and skeletal muscle.

The protein localises to the cytoplasm. It localises to the cell surface. Its function is as follows. May regulate the disassembly of focal adhesions. May localize receptor-like tyrosine phosphatases type 2A at specific sites on the plasma membrane, possibly regulating their interaction with the extracellular environment and their association with substrates. In Homo sapiens (Human), this protein is Liprin-alpha-4 (PPFIA4).